The following is a 135-amino-acid chain: uncharacterized protein (135 aa).

The next 4 helical transmembrane spans lie at 7–25 (WSAAVLAAAVSFLYGEWTI), 29–51 (ILLTLVVIDYGTGLVAAGVTGNI), 64–85 (VFIFVMVAIAHMIDTVLLEVGI), and 89–108 (ALIFMAAVVFYIVNELISIF).

Belongs to the bacteriophage holin family. Cp-1 holin subfamily.

It localises to the cell membrane. This is an uncharacterized protein from Halalkalibacterium halodurans (strain ATCC BAA-125 / DSM 18197 / FERM 7344 / JCM 9153 / C-125) (Bacillus halodurans).